Consider the following 462-residue polypeptide: Cytochrome P450 20A1 (462 aa).

The helical transmembrane segment at 4 to 24 (FAIFAVTFLLALVGAVLYLYP) threads the bilayer. Cysteine 409 contributes to the heme binding site.

The protein belongs to the cytochrome P450 family. The cofactor is heme.

It localises to the membrane. The protein is Cytochrome P450 20A1 (Cyp20a1) of Mus musculus (Mouse).